A 459-amino-acid chain; its full sequence is Putrescine aminotransferase (459 aa).

Pyridoxal 5'-phosphate-binding positions include 150-151 (GT) and glutamine 274. Residue lysine 300 is modified to N6-(pyridoxal phosphate)lysine. Residue threonine 332 participates in pyridoxal 5'-phosphate binding.

The protein belongs to the class-III pyridoxal-phosphate-dependent aminotransferase family. Putrescine aminotransferase subfamily. Pyridoxal 5'-phosphate serves as cofactor.

It catalyses the reaction an alkane-alpha,omega-diamine + 2-oxoglutarate = an omega-aminoaldehyde + L-glutamate. It carries out the reaction putrescine + 2-oxoglutarate = 1-pyrroline + L-glutamate + H2O. The enzyme catalyses cadaverine + 2-oxoglutarate = 5-aminopentanal + L-glutamate. It functions in the pathway amine and polyamine degradation; putrescine degradation; 4-aminobutanal from putrescine (transaminase route): step 1/1. Its function is as follows. Catalyzes the aminotransferase reaction from putrescine to 2-oxoglutarate, leading to glutamate and 4-aminobutanal, which spontaneously cyclizes to form 1-pyrroline. This is the first step in one of two pathways for putrescine degradation, where putrescine is converted into 4-aminobutanoate (gamma-aminobutyrate or GABA) via 4-aminobutanal. Also functions as a cadaverine transaminase in a a L-lysine degradation pathway to succinate that proceeds via cadaverine, glutarate and L-2-hydroxyglutarate. This Escherichia coli O7:K1 (strain IAI39 / ExPEC) protein is Putrescine aminotransferase.